Here is a 553-residue protein sequence, read N- to C-terminus: Solute carrier family 2, facilitated glucose transporter member 10 (553 aa).

Residues 1 to 15 lie on the Cytoplasmic side of the membrane; sequence MGLRSTTLVLAATSS. A helical membrane pass occupies residues 16-36; sequence LLGGLIFGYELGIISGALLML. At 37 to 48 the chain is on the extracellular side; it reads KTVFQLTCFEQE. Residues 49–69 traverse the membrane as a helical segment; the sequence is ALVSAVLFGALLASLIGGFII. At 70-82 the chain is on the cytoplasmic side; that stretch reads DRSGRRTSIMGSN. Residues 83–103 form a helical membrane-spanning segment; it reads LVVLAGSIILIATSSFWWLVV. The Extracellular segment spans residues 104–105; it reads GR. Residues 106–126 traverse the membrane as a helical segment; sequence VTVGFAISISSMACCIYVSEI. Topologically, residues 127 to 132 are cytoplasmic; sequence VRPHQR. Residues 133–153 traverse the membrane as a helical segment; the sequence is GTLVSLYETGITVGILISYAM. Residues 154–165 are Extracellular-facing; the sequence is NYFLSAVNDGWK. The helical transmembrane segment at 166 to 186 threads the bilayer; that stretch reads YMFGLAIIPAAFQFIVILFLP. At 187–240 the chain is on the cytoplasmic side; sequence SKPHTLNFWEQDSDNGFIELEEAGESGEFKPDTYDKQYTFLDLFRSKDNMRTRT. The helical transmembrane segment at 241–261 threads the bilayer; it reads LLGLGLVLFQQFTGQPNVLYY. 250-251 lines the D-glucose pocket; the sequence is QQ. The Extracellular portion of the chain corresponds to 262 to 277; that stretch reads ASTIFRSVGFQSNSSA. The N-linked (GlcNAc...) asparagine glycan is linked to Asn274. The helical transmembrane segment at 278–298 threads the bilayer; sequence VLASVGLGVVKVASTLIAICF. The Cytoplasmic segment spans residues 299–305; sequence ADKAGRR. The helical transmembrane segment at 306–326 threads the bilayer; sequence ILLLAGCIVMTIAISGIGIVS. The Extracellular segment spans residues 327 to 413; sequence FMVELDSHRD…PPAGPDSNYA (87 aa). Asn344, Asn351, and Asn400 each carry an N-linked (GlcNAc...) asparagine glycan. A helical membrane pass occupies residues 414–434; it reads ILNWITLLSMMAFVSAFSIGF. Residues 435-462 are Cytoplasmic-facing; it reads GPMTWLVLSEIYPADIRGRAFAFCNSFN. D-glucose is bound at residue Trp439. The helical transmembrane segment at 463–482 threads the bilayer; that stretch reads WAANLLITLTFLEVIGSIGL. Residue Gly483 is a topological domain, extracellular. The chain crosses the membrane as a helical span at residues 484-504; sequence WTFLLYGGVGLLAIAFIYFFI. Residues 505-553 lie on the Cytoplasmic side of the membrane; sequence PETKGQSLEEIDQQLSSKRISKRRETSKGVRKRPSTGPPYQRVGKSNWT. The disordered stretch occupies residues 522 to 553; that stretch reads KRISKRRETSKGVRKRPSTGPPYQRVGKSNWT.

This sequence belongs to the major facilitator superfamily. Sugar transporter (TC 2.A.1.1) family. Glucose transporter subfamily.

It localises to the endomembrane system. Its subcellular location is the cytoplasm. The protein localises to the perinuclear region. The catalysed reaction is D-glucose(out) = D-glucose(in). Its function is as follows. Facilitative glucose transporter required for the development of the cardiovascular system. The polypeptide is Solute carrier family 2, facilitated glucose transporter member 10 (Xenopus laevis (African clawed frog)).